A 356-amino-acid chain; its full sequence is Protein disulfide isomerase crld-1 (356 aa).

An N-terminal signal peptide occupies residues 1-17 (MSRILLLLAVLIGATSQ). The Lumenal segment spans residues 18–299 (KEVTIKNEKC…DRPFMPIDQQ (282 aa)). A CXXC motif is present at residues 27–30 (CRTC). A disulfide bond links cysteine 27 and cysteine 30. Asparagine 122 carries N-linked (GlcNAc...) asparagine glycosylation. The EGF-like 1 domain maps to 150-188 (GLSEKADVCFGKGSCHGDGSREGSGKCKCETGYTGNLCR). Cystine bridges form between cysteine 158–cysteine 176, cysteine 178–cysteine 187, cysteine 245–cysteine 258, cysteine 251–cysteine 267, and cysteine 269–cysteine 281. Positions 241 to 282 (DVNECQNESACTKEHEICVNTVGSFKCECKEGYKKDDEQNCQ) constitute an EGF-like 2; calcium-binding domain. Asparagine 247 is a glycosylation site (N-linked (GlcNAc...) asparagine). Residues 300–317 (LKLIAFSSLIIIITFVVW) form a helical membrane-spanning segment. Topologically, residues 318–321 (HGSP) are cytoplasmic. A helical transmembrane segment spans residues 322–341 (VLYVLTGITIVALILVDLYV). Residues 342 to 356 (NPDTIPDEAKRFLGY) lie on the Lumenal side of the membrane.

The protein belongs to the CRELD family. In terms of assembly, interacts with unc-29. In terms of tissue distribution, isoforms a: Widely expressed in tissues including body wall muscles, neurons, pharynx, hypodermis, seam cells, intestine and gonad. Isoform b: Widely expressed in tissues including body wall muscles, neurons, pharynx, hypodermis, seam cells, intestine and gonad.

The protein resides in the endoplasmic reticulum membrane. It is found in the endoplasmic reticulum lumen. The catalysed reaction is Catalyzes the rearrangement of -S-S- bonds in proteins.. Protein disulfide isomerase which associates with the unc-29 subunit of levamisole-sensitive nicotinic acetylcholine receptors (L-nAChR) to promote L-nAChR assembly in the endoplasmic reticulum at neuromuscular junctions. In terms of biological role, promotes L-nAChR assembly in the endoplasmic reticulum at neuromuscular junctions. In Caenorhabditis elegans, this protein is Protein disulfide isomerase crld-1.